A 67-amino-acid chain; its full sequence is Large ribosomal subunit protein bL32 (67 aa).

The span at 1 to 19 (MAVPKRKMSRSNTRARRSQ) shows a compositional bias: basic residues. Positions 1–21 (MAVPKRKMSRSNTRARRSQWK) are disordered.

This sequence belongs to the bacterial ribosomal protein bL32 family.

The polypeptide is Large ribosomal subunit protein bL32 (Clavibacter michiganensis subsp. michiganensis (strain NCPPB 382)).